Consider the following 183-residue polypeptide: Adenine phosphoribosyltransferase (183 aa).

Belongs to the purine/pyrimidine phosphoribosyltransferase family. In terms of assembly, homodimer.

The protein resides in the cytoplasm. The enzyme catalyses AMP + diphosphate = 5-phospho-alpha-D-ribose 1-diphosphate + adenine. Its pathway is purine metabolism; AMP biosynthesis via salvage pathway; AMP from adenine: step 1/1. Its function is as follows. Catalyzes a salvage reaction resulting in the formation of AMP, that is energically less costly than de novo synthesis. This chain is Adenine phosphoribosyltransferase, found in Blochmanniella floridana.